The primary structure comprises 120 residues: MNLSYLVACGLMITLLSVRMGAKPLSQAQQKSFRSLLGEELAEFLESEEKERRLDAVRSRLRLLRDLRMDTRARGVWARLLNDQPVPRRHKTGIKKGGSSRSGCFGHKMDRIGTISGMGC.

The N-terminal stretch at 1 to 22 (MNLSYLVACGLMITLLSVRMGA) is a signal peptide. The propeptide occupies 23 to 96 (KPLSQAQQKS…PRRHKTGIKK (74 aa)). Cys-104 and Cys-120 are joined by a disulfide.

This sequence belongs to the natriuretic peptide family.

The protein localises to the secreted. In terms of biological role, exhibits natriuretic and vasodepressant activity. Has cGMP-stimulating activity. May help to regulate body fluid homeostasis in a variety of aquatic environments. This chain is C-type natriuretic peptide 4, found in Takifugu rubripes (Japanese pufferfish).